A 749-amino-acid polypeptide reads, in one-letter code: Signal transducer and activator of transcription 4 (749 aa).

In terms of domain architecture, SH2 spans 570 to 665 (WIDGYIMGFV…ENPLKYLYPD (96 aa)). Lys668 bears the N6-acetyllysine mark. Phosphotyrosine; by JAK is present on Tyr694. Residue Ser722 is modified to Phosphoserine.

This sequence belongs to the transcription factor STAT family. As to quaternary structure, forms a homodimer or a heterodimer with a related family member. Interacts with ARL2BP. Interacts with STAT1. Interacts with JUN; this complex efficiently interacts with the AP-1-related sequence of the IFN-gamma promoter. Post-translationally, acetylation at Lys-668 is required for JAK2-mediated phosphorylation and activation of STAT4. Tyrosine phosphorylated upon IL12 and IFN-alpha activation, but not by IFN-gamma in T-lymphocytes and NK cells. Serine phosphorylation is required for maximal transcriptional activity but not for DNA binding. Phosphorylation by MAP2K6 at Ser-722 is required for full transcriptional activity induced by IL12. However this serine phosphorylation is not required for cell proliferation although critical for IFN-gamma production. As to expression, expression is restricted to testis, thymus, and spleen.

It localises to the cytoplasm. Its subcellular location is the nucleus. Its function is as follows. Transcriptional regulator mainly expressed in hematopoietic cells that plays a critical role in cellular growth, differentiation and immune response. Plays a key role in the differentiation of T-helper 1 cells and the production of interferon-gamma. Also participates in multiple neutrophil functions including chemotaxis and production of the neutrophil extracellular traps. After IL12 binding to its receptor IL12RB2, STAT4 interacts with the intracellular domain of IL12RB2 and becomes tyrosine phosphorylated. Phosphorylated STAT4 then homodimerizes and migrates to the nucleus where it can recognize STAT target sequences present in IL12 responsive genes. Although IL12 appears to be the predominant activating signal, STAT4 can also be phosphorylated and activated in response to IFN-gamma stimulation via JAK1 and TYK2 and in response to different interleukins including IL23, IL2 and IL35. Transcription activation of IFN-gamma gene is mediated by interaction with JUN that forms a complex that efficiently interacts with the AP-1-related sequence of the IFN-gamma promoter. In response to IFN-alpha/beta signaling, acts as a transcriptional repressor and suppresses IL5 and IL13 mRNA expression during response to T-cell receptor (TCR) activation. The polypeptide is Signal transducer and activator of transcription 4 (Stat4) (Mus musculus (Mouse)).